Consider the following 84-residue polypeptide: Sec-independent protein translocase protein TatA (84 aa).

The chain crosses the membrane as a helical span at residues 1–21 (MGGFSIWHWLIVLLIVVMVFG). The interval 40 to 84 (KDGMKDGGQSPADEKPVVPASQVTNAQAADKAERNTIDVEARQKS) is disordered. The span at 69–84 (DKAERNTIDVEARQKS) shows a compositional bias: basic and acidic residues.

It belongs to the TatA/E family. In terms of assembly, the Tat system comprises two distinct complexes: a TatABC complex, containing multiple copies of TatA, TatB and TatC subunits, and a separate TatA complex, containing only TatA subunits. Substrates initially bind to the TatABC complex, which probably triggers association of the separate TatA complex to form the active translocon.

It is found in the cell inner membrane. In terms of biological role, part of the twin-arginine translocation (Tat) system that transports large folded proteins containing a characteristic twin-arginine motif in their signal peptide across membranes. TatA could form the protein-conducting channel of the Tat system. This Polaromonas naphthalenivorans (strain CJ2) protein is Sec-independent protein translocase protein TatA.